The following is a 1149-amino-acid chain: MASASGAENSSVPPSPLPPPPPPQIHTSRTKLSHHHHNNNNNNNNNIDSTSKAIAQYTEDARLHAVFEQSGESGRSFDYSQSIRVTSESVPEQQITAYLLKIQRGGFIQPFGSMIAVDEPSFRILAYSDNARDMLGITPQSVPSLDDKNDAAFALGTDIRTLFTHSSAVLLEKAFSAREISLMNPIWIHSRTSGKPFYGILHRIDVGIVIDLEPARTEDPALSIAGAVQSQKLAVRAISQLQSLPGGDVKLLCDTVVESVRELTGYDRVMVYRFHEDEHGEVVAETKRPDLEPYIGLHYPATDIPQASRFLFKQNRVRMIVDCHASAVRVVQDEALVQPLCLVGSTLRAPHGCHAQYMANMGSTASLVMAVIINGNDEEGVGGRTSMRLWGLVVCHHTSARCIPFPLRYACEFLMQAFGLQLNMELQLAAQSLEKRVLRTQTLLCDMLLRDSPTGIVTQSPSIMDLVKCDGAALYYQGNYYPLGVTPTEAQIRDIIEWLLAFHRDSTGLSTDSLADAGYPGAASLGDAVCGMAVAYITEKDFLFWFRSHTAKEIKWGGAKHHPEDKDDGQRMHPRSSFKAFLEVVKSRSLPWENAEMDAIHSLQLILRDSFKDAEHSNSKAVLDPRMSELELQGVDELSSVAREMVRLIETATAPIFAVDVDGRINGWNAKVSELTGLPVEEAMGKSLVRDLVFKESEETVDKLLSRALKGEEDKNVEIKMRTFGPEHQNKAVFVVVNACSSKDYTNNVVGVCFVGQDVTGQKIVMDKFINIQGDYKAIVHNPNPLIPPIFASDDNTCCLEWNTAMEKLTGWSRADVIGKMLVGEVFGSCCQLKGSDSITKFMIVLHNALGGHDTDRFPFSFLDRYGKHVQAFLTANKRVNMDGQIIGAFCFLQIVSPELQQALKAQRQQEKNSFARMKELAYICQGVKNPLSGIRFTNSLLEATCLSNEQKQFLETSAACEKQMLKIIHDVDIESIEDGSLELEKGEFLLGNVINAVVSQVMLLLRERNLQLIRDIPEEIKTLAVYGDQLRIQQVLSDFLLNIVRYAPSPDGWVEIHVHPRIKQISDGLTLLHAEFRMVCPGEGLPPELIQNMFNNSGWGTQEGLGLSMSRKILKLMNGEVQYIREAQRCYFYVLLELPVTRRSSKKC.

Residues 1–48 are disordered; that stretch reads MASASGAENSSVPPSPLPPPPPPQIHTSRTKLSHHHHNNNNNNNNNID. Pro residues predominate over residues 13–24; sequence PPSPLPPPPPPQ. Residues 28–38 are compositionally biased toward basic residues; sequence SRTKLSHHHHN. The 183-residue stretch at 267-449 folds into the GAF domain; it reads DRVMVYRFHE…TQTLLCDMLL (183 aa). Cys-353 is a phytochromobilin binding site. 2 PAS domains span residues 641–712 and 775–846; these read VARE…LKGE and DYKA…MIVL. Residues 923–1143 enclose the Histidine kinase domain; sequence YICQGVKNPL…YVLLELPVTR (221 aa).

This sequence belongs to the phytochrome family. Heterodimer between subunit A and subunit B. Post-translationally, contains one covalently linked phytochromobilin chromophore.

Functionally, regulatory photoreceptor which exists in two forms that are reversibly interconvertible by light: the Pr form that absorbs maximally in the red region of the spectrum and the Pfr form that absorbs maximally in the far-red region. Photoconversion of Pr to Pfr induces an array of morphogenic responses, whereas reconversion of Pfr to Pr cancels the induction of those responses. Pfr controls the expression of a number of nuclear genes including those encoding the small subunit of ribulose-bisphosphate carboxylase, chlorophyll A/B binding protein, protochlorophyllide reductase, rRNA, etc. It also controls the expression of its own gene(s) in a negative feedback fashion. This is Phytochrome B-2 from Glycine max (Soybean).